A 357-amino-acid polypeptide reads, in one-letter code: Aspartate carbamoyltransferase catalytic subunit (357 aa).

A compositionally biased stretch (polar residues) spans 1-15 (MSNSIDSQSLPTVSP). A disordered region spans residues 1-21 (MSNSIDSQSLPTVSPTDYARF). The carbamoyl phosphate site is built by arginine 97 and threonine 98. Lysine 125 is an L-aspartate binding site. Carbamoyl phosphate-binding residues include arginine 147, histidine 177, and glutamine 180. Residues arginine 211 and arginine 266 each coordinate L-aspartate. Carbamoyl phosphate contacts are provided by glycine 307 and proline 308.

It belongs to the aspartate/ornithine carbamoyltransferase superfamily. ATCase family. In terms of assembly, heterododecamer (2C3:3R2) of six catalytic PyrB chains organized as two trimers (C3), and six regulatory PyrI chains organized as three dimers (R2).

The enzyme catalyses carbamoyl phosphate + L-aspartate = N-carbamoyl-L-aspartate + phosphate + H(+). It participates in pyrimidine metabolism; UMP biosynthesis via de novo pathway; (S)-dihydroorotate from bicarbonate: step 2/3. In terms of biological role, catalyzes the condensation of carbamoyl phosphate and aspartate to form carbamoyl aspartate and inorganic phosphate, the committed step in the de novo pyrimidine nucleotide biosynthesis pathway. In Psychrobacter cryohalolentis (strain ATCC BAA-1226 / DSM 17306 / VKM B-2378 / K5), this protein is Aspartate carbamoyltransferase catalytic subunit.